The sequence spans 438 residues: tRNA modification GTPase MnmE (438 aa).

(6S)-5-formyl-5,6,7,8-tetrahydrofolate contacts are provided by Arg20, Glu79, and Lys119. Positions 215-360 (GVEVAIVGPP…LEAALAARVG (146 aa)) constitute a TrmE-type G domain. GTP contacts are provided by residues 225–230 (NAGKSS), 244–250 (SDEAGTT), and 269–272 (DTAG). 2 residues coordinate Mg(2+): Ser229 and Thr250. Lys438 provides a ligand contact to (6S)-5-formyl-5,6,7,8-tetrahydrofolate.

Belongs to the TRAFAC class TrmE-Era-EngA-EngB-Septin-like GTPase superfamily. TrmE GTPase family. Homodimer. Heterotetramer of two MnmE and two MnmG subunits. K(+) is required as a cofactor.

It is found in the cytoplasm. Functionally, exhibits a very high intrinsic GTPase hydrolysis rate. Involved in the addition of a carboxymethylaminomethyl (cmnm) group at the wobble position (U34) of certain tRNAs, forming tRNA-cmnm(5)s(2)U34. This is tRNA modification GTPase MnmE from Parvibaculum lavamentivorans (strain DS-1 / DSM 13023 / NCIMB 13966).